We begin with the raw amino-acid sequence, 570 residues long: Sulfite reductase [NADPH] hemoprotein beta-component (570 aa).

Cys-434, Cys-440, Cys-479, and Cys-483 together coordinate [4Fe-4S] cluster. Cys-483 serves as a coordination point for siroheme.

The protein belongs to the nitrite and sulfite reductase 4Fe-4S domain family. Alpha(8)-beta(8). The alpha component is a flavoprotein, the beta component is a hemoprotein. Requires siroheme as cofactor. [4Fe-4S] cluster is required as a cofactor.

The enzyme catalyses hydrogen sulfide + 3 NADP(+) + 3 H2O = sulfite + 3 NADPH + 4 H(+). It participates in sulfur metabolism; hydrogen sulfide biosynthesis; hydrogen sulfide from sulfite (NADPH route): step 1/1. In terms of biological role, component of the sulfite reductase complex that catalyzes the 6-electron reduction of sulfite to sulfide. This is one of several activities required for the biosynthesis of L-cysteine from sulfate. This is Sulfite reductase [NADPH] hemoprotein beta-component from Salmonella enteritidis PT4 (strain P125109).